Here is a 123-residue protein sequence, read N- to C-terminus: Large ribosomal subunit protein uL29 (123 aa).

It belongs to the universal ribosomal protein uL29 family.

The polypeptide is Large ribosomal subunit protein uL29 (RPL35) (Theileria lestoquardi).